The chain runs to 450 residues: MCDFMDYIQLAFYDASKWNRDNSYSRLTTTANALLDFSTPERLKVNLSSLSTPHFATTYTLGTVGLIDGSISYLFTTIPLHNTPSRSSLIPLRKLVPGYRQIYPPSIPIEYPTANDHSGIPAAVRSKADNPKMKPTLLHATLHLPPPTTLTGLFICRLSSTTQLSLAVCSSRAPASKSAPQATLLTQIFHDTGKYSSEFLFSTDNALLGFKGLWNFGPDPRKPTRGDPASQRSRPLLSLLSAGGEVYYSPVSSVVGLSTGLRFATLPAATENAHSAFPYTLTLTLTPLTGSMSTTYSLLASPNLAFSSRFGFNVYSWESEMVAGCELWRRSKSKSQNIYPSAVDNLAWARLKMGVPDTAVSVNPEHELSYFHKEGHNSSHASDSVIKVRVDQSWNIRALWEGRVKELLISAGVALGPASRSTLSYASPVAPGGLSSYGWKSVGVSVLYAS.

The protein belongs to the MDM10 family. Component of the ER-mitochondria encounter structure (ERMES) or MDM complex, composed of MMM1, MDM10, MDM12 and MDM34. Associates with the mitochondrial outer membrane sorting assembly machinery SAM(core) complex.

The protein localises to the mitochondrion outer membrane. Functionally, component of the ERMES/MDM complex, which serves as a molecular tether to connect the endoplasmic reticulum and mitochondria. Components of this complex are involved in the control of mitochondrial shape and protein biogenesis and may function in phospholipid exchange. MDM10 is involved in the late assembly steps of the general translocase of the mitochondrial outer membrane (TOM complex). Functions in the TOM40-specific route of the assembly of outer membrane beta-barrel proteins, including the association of TOM40 with the receptor TOM22 and small TOM proteins. Can associate with the SAM(core) complex as well as the MDM12-MMM1 complex, both involved in late steps of the major beta-barrel assembly pathway, that is responsible for biogenesis of all outer membrane beta-barrel proteins. May act as a switch that shuttles between both complexes and channels precursor proteins into the TOM40-specific pathway. Plays a role in mitochondrial morphology and in the inheritance of mitochondria. This chain is Mitochondrial distribution and morphology protein 10, found in Paracoccidioides lutzii (strain ATCC MYA-826 / Pb01) (Paracoccidioides brasiliensis).